We begin with the raw amino-acid sequence, 864 residues long: Disintegrin and metalloproteinase domain-containing protein 15 (864 aa).

Residues 1-17 (MRLALLWALGLLGAGSP) form the signal peptide. Residues 17-49 (PRPSPPLPNIGGTEEEQQASPERTQSRSLENQV) form a disordered region. The propeptide occupies 18 to 208 (RPSPPLPNIG…EQHHLRRLKR (191 aa)). Residues 34–49 (QASPERTQSRSLENQV) show a composition bias toward polar residues. A glycan (N-linked (GlcNAc...) asparagine) is linked at asparagine 57. The Cysteine switch motif lies at 178-185 (HTCAPSWH). Residue cysteine 180 coordinates Zn(2+). Residues 209 to 698 (DVVTETKIVE…QLRATSSLTT (490 aa)) lie on the Extracellular side of the membrane. The Peptidase M12B domain occupies 215 to 416 (KIVELVIVAD…GMGSCLFEWP (202 aa)). Asparagine 239 carries N-linked (GlcNAc...) asparagine glycosylation. 4 disulfides stabilise this stretch: cysteine 325–cysteine 411, cysteine 367–cysteine 395, cysteine 369–cysteine 378, and cysteine 482–cysteine 502. A Zn(2+)-binding site is contributed by histidine 350. Residue glutamate 351 is part of the active site. Histidine 354 and histidine 360 together coordinate Zn(2+). N-linked (GlcNAc...) asparagine glycans are attached at residues asparagine 391 and asparagine 394. In terms of domain architecture, Disintegrin spans 423–510 (SSLCGNMFVD…QCPPDIRLGD (88 aa)). 2 N-linked (GlcNAc...) asparagine glycosylation sites follow: asparagine 608 and asparagine 613. 3 disulfide bridges follow: cysteine 659–cysteine 669, cysteine 663–cysteine 675, and cysteine 677–cysteine 686. The region spanning 659-687 (CRSKCHGHGVCDSSRHCHCDEGWAPPDCM) is the EGF-like domain. A helical membrane pass occupies residues 699–719 (GLLLSLLLLLVLVLLGASYWY). Tyrosine 717 and tyrosine 737 each carry phosphotyrosine; by HCK and LCK. At 720–864 (RARLHQRLCQ…PPPAASSLYL (145 aa)) the chain is on the cytoplasmic side. The segment at 738–864 (RAAQSGPPER…PPPAASSLYL (127 aa)) is disordered. Over residues 753–765 (RAQQMPGTKQANV) the composition is skewed to polar residues. Pro residues-rich tracts occupy residues 768 to 780 (PVPPSRPLPPNPV) and 810 to 825 (PQGPTKPPPPRKPLPA). The short motif at 816–822 (PPPPRKP) is the SH3-binding element. Residues 826-850 (NPQGRPPLGDLPGPGDGSLQLVVPS) show a composition bias toward low complexity. The SH3-binding signature appears at 851-857 (RPAPPPP).

As to quaternary structure, interacts with ITAGV-ITGB3 (vitronectin receptor). Interacts with SH3GL2 and SNX9; this interaction occurs preferentially with ADAM15 precursor, rather than the processed form, suggesting it occurs in a secretory pathway compartment prior to the medial Golgi. Interacts with ITAG9-ITGB1. Interacts specifically with Src family protein-tyrosine kinases (PTKs). Interacts with SH3PXD2A. Interacts with ITAGV-ITGB1. Interacts with GRB2, HCK, ITSN1, ITSN2, LYN, MAPK1, MAPK3, NCF1, NCK1, nephrocystin, PTK6, SNX33, LCK and SRC. It depends on Zn(2+) as a cofactor. Post-translationally, the precursor is cleaved by a furin endopeptidase. In terms of processing, phosphorylation increases association with PTKs. Predominantly expressed in brain, spinal cord, sciatic nerve and lung. Expressed at lower levels in all other tissues. In the peripheral nervous system, expressed predominantly by Schwann cells. In the central nervous system, preferentially expressed by neuronal cells.

Its subcellular location is the endomembrane system. It is found in the cell junction. It localises to the adherens junction. The protein localises to the cell projection. The protein resides in the cilium. Its subcellular location is the flagellum. It is found in the cytoplasmic vesicle. It localises to the secretory vesicle. The protein localises to the acrosome. In terms of biological role, active metalloproteinase with gelatinolytic and collagenolytic activity. Plays a role in the wound healing process. Mediates both heterotypic intraepithelial cell/T-cell interactions and homotypic T-cell aggregation. Inhibits beta-1 integrin-mediated cell adhesion and migration of airway smooth muscle cells. Suppresses cell motility on or towards fibronectin possibly by driving alpha-v/beta-1 integrin (ITAGV-ITGB1) cell surface expression via ERK1/2 inactivation. Cleaves E-cadherin in response to growth factor deprivation. Plays a role in glomerular cell migration. Plays a role in pathological neovascularization. May play a role in cartilage remodeling. May be proteolytically processed, during sperm epididymal maturation and the acrosome reaction. May play a role in sperm-egg binding through its disintegrin domain. This chain is Disintegrin and metalloproteinase domain-containing protein 15 (Adam15), found in Rattus norvegicus (Rat).